The primary structure comprises 230 residues: 7-cyano-7-deazaguanine synthase (230 aa).

ATP is bound at residue Leu8–Thr18. The Zn(2+) site is built by Cys186, Cys196, Cys199, and Cys202.

The protein belongs to the QueC family. Zn(2+) is required as a cofactor.

The catalysed reaction is 7-carboxy-7-deazaguanine + NH4(+) + ATP = 7-cyano-7-deazaguanine + ADP + phosphate + H2O + H(+). Its pathway is purine metabolism; 7-cyano-7-deazaguanine biosynthesis. Its function is as follows. Catalyzes the ATP-dependent conversion of 7-carboxy-7-deazaguanine (CDG) to 7-cyano-7-deazaguanine (preQ(0)). In Xylella fastidiosa (strain 9a5c), this protein is 7-cyano-7-deazaguanine synthase.